Here is an 81-residue protein sequence, read N- to C-terminus: Small ribosomal subunit protein bS18 (81 aa).

This sequence belongs to the bacterial ribosomal protein bS18 family. In terms of assembly, part of the 30S ribosomal subunit. Forms a tight heterodimer with protein bS6.

Its function is as follows. Binds as a heterodimer with protein bS6 to the central domain of the 16S rRNA, where it helps stabilize the platform of the 30S subunit. The polypeptide is Small ribosomal subunit protein bS18 (Chlamydia trachomatis serovar L2 (strain ATCC VR-902B / DSM 19102 / 434/Bu)).